Reading from the N-terminus, the 213-residue chain is Redox-sensing transcriptional repressor Rex (213 aa).

The H-T-H motif DNA-binding region spans 18 to 57 (LYYRIFKRFHAEKIERANSKQIAEAIGIDSATVRRDFSYF). 92–97 (GIGNMG) provides a ligand contact to NAD(+).

The protein belongs to the transcriptional regulatory Rex family. As to quaternary structure, homodimer.

The protein resides in the cytoplasm. In terms of biological role, modulates transcription in response to changes in cellular NADH/NAD(+) redox state. Binds to the promoter of the aldehyde-alcohol dehydrogenase adhE gene. Functions as a redox-dependent repressor of adhE expression. In Streptococcus pneumoniae (strain ATCC BAA-255 / R6), this protein is Redox-sensing transcriptional repressor Rex.